Reading from the N-terminus, the 666-residue chain is Nuclear distribution protein nudE homolog 1 (666 aa).

The stretch at 14–195 (EEEIAHYREK…KDQLARAIAT (182 aa)) forms a coiled coil. Disordered regions lie at residues 40-64 (EFQQ…KQQA), 220-310 (DDIN…SGIP), 369-388 (KRVT…PAPH), and 397-666 (DHNT…KVKK). A compositionally biased stretch (polar residues) spans 251–274 (RSGTMSSIPVASPSTKRFSQQIPH). Low complexity-rich tracts occupy residues 275-287 (SPSF…STTS) and 372-383 (TSTTSTTSSTTT). The span at 400–410 (TTPTAQSQQFP) shows a compositional bias: polar residues. 3 stretches are compositionally biased toward low complexity: residues 449–465 (PTFR…LPSR), 473–485 (ASGS…SGTA), and 536–554 (SATP…STSN). Composition is skewed to polar residues over residues 587 to 599 (RQSL…TPTT) and 614 to 638 (SSLS…SGRP).

It belongs to the nudE family. As to quaternary structure, self-associates. Interacts with PAC1.

The protein resides in the cytoplasm. It localises to the cytoskeleton. In terms of biological role, required for nuclear migration. The protein is Nuclear distribution protein nudE homolog 1 (NDE1) of Cryptococcus neoformans var. neoformans serotype D (strain JEC21 / ATCC MYA-565) (Filobasidiella neoformans).